The following is a 386-amino-acid chain: Phosphoglycerate kinase (386 aa).

Substrate-binding positions include aspartate 21 to asparagine 23, arginine 36, histidine 59 to arginine 62, arginine 112, and arginine 145. Residues lysine 196, glutamate 313, and glycine 339 to threonine 342 each bind ATP.

This sequence belongs to the phosphoglycerate kinase family. In terms of assembly, monomer.

The protein resides in the cytoplasm. It catalyses the reaction (2R)-3-phosphoglycerate + ATP = (2R)-3-phospho-glyceroyl phosphate + ADP. Its pathway is carbohydrate degradation; glycolysis; pyruvate from D-glyceraldehyde 3-phosphate: step 2/5. The protein is Phosphoglycerate kinase of Haemophilus influenzae (strain PittGG).